Here is a 309-residue protein sequence, read N- to C-terminus: DDRGK domain-containing protein 1 (309 aa).

The Lumenal segment spans residues 1-2; it reads MD. The helical transmembrane segment at 3-23 threads the bilayer; the sequence is LIILVGIAVALLVVIVTLYLL. The Cytoplasmic portion of the chain corresponds to 24 to 309; it reads QKKNAAPETK…ISAGGGEASS (286 aa). Disordered stretches follow at residues 32-53 and 79-175; these read TKVA…VPRR and ALPA…KEER. The segment covering 87-96 has biased composition (acidic residues); that stretch reads DHEDEGQVDG. Basic and acidic residues predominate over residues 107 to 175; sequence LDEKMGAKKR…DAERLAKEER (69 aa). The stretch at 120–177 forms a coiled coil; that stretch reads EAKEQKRLQREQELHDREQRKVKEAKEEAERKQQEDLEAEAERKRVDAERLAKEERER.

This sequence belongs to the DDRGK1 family. As to quaternary structure, interacts with Atg9; the interaction is transient.

The protein resides in the endoplasmic reticulum membrane. Substrate adapter for ufmylation, the covalent attachment of the ubiquitin-like modifier UFM1 to substrate proteins. Required for ufmylation of Atg9; protects the nervous system during aging, possibly by stabilizing Atg9 and supporting its function. The sequence is that of DDRGK domain-containing protein 1 from Drosophila melanogaster (Fruit fly).